A 128-amino-acid chain; its full sequence is uncharacterized protein (128 aa).

This is an uncharacterized protein from Methanocaldococcus jannaschii (strain ATCC 43067 / DSM 2661 / JAL-1 / JCM 10045 / NBRC 100440) (Methanococcus jannaschii).